The chain runs to 110 residues: Red pigment-concentrating prohormone (110 aa).

A signal peptide spans 1–25 (MVRRTGVTLLVVALVVVALVSSVSA). Q26 is modified (pyrrolidone carboxylic acid). W33 is subject to Tryptophan amide.

This sequence belongs to the AKH/HRTH/RPCH family.

Its subcellular location is the secreted. Functionally, this hormone adapts the animal to light backgrounds by stimulating concentration of the pigment of its red body-chromatophores. The protein is Red pigment-concentrating prohormone of Carcinus maenas (Common shore crab).